The following is a 285-amino-acid chain: MAHFFKENSSCYFCFRYLENPVYLNCGYICCFQCLDSLEKSPEGDGVLCPNCSVVSLKEDIRHAKQLRNLVTTVKDLEPQLNFILTMDPSMKIFQVNMILDVDTAQNNLIISEDLRSVYHTSQTQDRKKCAERFDPSPCVLGSSRFTSGCHYWEVVVGTSKEWDIGICKESINRQEVVYLSEKKGFWTVGVRNEEVYAASTDPLTVLLVNPRLHRVGIFLDLLEKSVSFWDLGDGSHIYTFLEIPDTEPFRPFFSPANTYPDEEQVISICPVMNPSIFGLPVNPV.

The RING-type; degenerate zinc finger occupies 11 to 53; sequence CYFCFRYLENPVYLNCGYICCFQCLDSLEKSPEGDGVLCPNCS. The region spanning 78–276 is the B30.2/SPRY domain; that stretch reads EPQLNFILTM…ISICPVMNPS (199 aa).

As to quaternary structure, interacts with PSMB1, UBE2A and CCNB1.

The protein localises to the cytoplasm. It is found in the nucleus. This chain is Ret finger protein-like 4A (Rfpl4a), found in Rattus norvegicus (Rat).